We begin with the raw amino-acid sequence, 204 residues long: uncharacterized protein (204 aa).

This is an uncharacterized protein from Saccharomyces cerevisiae (strain ATCC 204508 / S288c) (Baker's yeast).